A 416-amino-acid polypeptide reads, in one-letter code: UDP-N-acetylglucosamine 1-carboxyvinyltransferase (416 aa).

22 to 23 (KN) is a phosphoenolpyruvate binding site. R91 lines the UDP-N-acetyl-alpha-D-glucosamine pocket. C115 acts as the Proton donor in catalysis. A 2-(S-cysteinyl)pyruvic acid O-phosphothioketal modification is found at C115. UDP-N-acetyl-alpha-D-glucosamine contacts are provided by residues 120–124 (RPVDL), D303, and I325.

The protein belongs to the EPSP synthase family. MurA subfamily.

Its subcellular location is the cytoplasm. The catalysed reaction is phosphoenolpyruvate + UDP-N-acetyl-alpha-D-glucosamine = UDP-N-acetyl-3-O-(1-carboxyvinyl)-alpha-D-glucosamine + phosphate. The protein operates within cell wall biogenesis; peptidoglycan biosynthesis. Its function is as follows. Cell wall formation. Adds enolpyruvyl to UDP-N-acetylglucosamine. This chain is UDP-N-acetylglucosamine 1-carboxyvinyltransferase, found in Oleidesulfovibrio alaskensis (strain ATCC BAA-1058 / DSM 17464 / G20) (Desulfovibrio alaskensis).